The sequence spans 554 residues: Hydroxylamine reductase (554 aa).

[2Fe-2S] cluster-binding residues include C3, C6, C18, and C25. Residues H252, E276, C320, C408, C436, C461, E495, and K497 each contribute to the hybrid [4Fe-2O-2S] cluster site. A Cysteine persulfide modification is found at C408.

Belongs to the HCP family. It depends on [2Fe-2S] cluster as a cofactor. Hybrid [4Fe-2O-2S] cluster serves as cofactor.

It localises to the cytoplasm. It catalyses the reaction A + NH4(+) + H2O = hydroxylamine + AH2 + H(+). Functionally, catalyzes the reduction of hydroxylamine to form NH(3) and H(2)O. This is Hydroxylamine reductase from Shewanella loihica (strain ATCC BAA-1088 / PV-4).